The chain runs to 67 residues: Metallothionein-A (67 aa).

It belongs to the metallothionein superfamily. Type 4 family.

Metallothioneins have a high content of cysteine residues that bind various heavy metals. This is Metallothionein-A from Sphaerechinus granularis (Purple sea urchin).